The primary structure comprises 376 residues: Heptahelical transmembrane protein ADIPOR1 (376 aa).

Over 1-90 (MGEEAAMATM…LSLFSWHNET (90 aa)) the chain is Cytoplasmic. The segment at 20–46 (PAAAPAPAKGGGSKKKRKQQKREEKRK) is disordered. The chain crosses the membrane as a helical span at residues 91 to 111 (INIWTHLLGFVLFFGLTVLHL). Topologically, residues 112 to 179 (GQYFPQVADL…AAAAATTRWP (68 aa)) are extracellular. A helical transmembrane segment spans residues 180 to 200 (FFVFLAGAMFCLLSSAACHLL). At 201–216 (SCHSHRLNLFLIRLDY) the chain is on the cytoplasmic side. The chain crosses the membrane as a helical span at residues 217–237 (TGIAVMIVVSFFPPIYYIFQC). The Extracellular portion of the chain corresponds to 238-240 (EPR). The helical transmembrane segment at 241 to 261 (WQVVYLSAITAAGVATVYALM) threads the bilayer. At 262-274 (SPRLSAARYRAHR) the chain is on the cytoplasmic side. A helical transmembrane segment spans residues 275–295 (ALLFVAMGLSGVVPAAHAVAV). At 296-303 (NWHEPRRN) the chain is on the extracellular side. Residues 304-324 (VTLAYEGAMAASYLAGTAFYL) traverse the membrane as a helical segment. The Cytoplasmic segment spans residues 325-344 (TRVPERWRPGMFDLCGHSHQ). A helical transmembrane segment spans residues 345–365 (IFHALVIAGALAHYAAAIVFI). At 366 to 376 (QARDEMGCPAP) the chain is on the extracellular side.

It belongs to the ADIPOR family.

The protein localises to the membrane. Functionally, may play a role in abiotic stress response. This Oryza sativa subsp. japonica (Rice) protein is Heptahelical transmembrane protein ADIPOR1 (ADIPOR1).